The following is a 345-amino-acid chain: N-acetyl-gamma-glutamyl-phosphate reductase (345 aa).

Residue cysteine 149 is part of the active site.

The protein belongs to the NAGSA dehydrogenase family. Type 1 subfamily.

The protein localises to the cytoplasm. The catalysed reaction is N-acetyl-L-glutamate 5-semialdehyde + phosphate + NADP(+) = N-acetyl-L-glutamyl 5-phosphate + NADPH + H(+). It functions in the pathway amino-acid biosynthesis; L-arginine biosynthesis; N(2)-acetyl-L-ornithine from L-glutamate: step 3/4. Functionally, catalyzes the NADPH-dependent reduction of N-acetyl-5-glutamyl phosphate to yield N-acetyl-L-glutamate 5-semialdehyde. The polypeptide is N-acetyl-gamma-glutamyl-phosphate reductase (Marinobacter nauticus (strain ATCC 700491 / DSM 11845 / VT8) (Marinobacter aquaeolei)).